The chain runs to 467 residues: Tubulointerstitial nephritis antigen-like (467 aa).

Residues 1 to 21 (MWRCPLGLLLLLPLAGHLALG) form the signal peptide. The SMB domain maps to 50 to 98 (EQDLCCRGRADDCALPYLGAICYCDLFCNRTVSDCCPDFWDFCLGVPPP). 5 disulfides stabilise this stretch: Cys54–Cys73, Cys71–Cys73, Cys71–Cys85, Cys77–Cys84, and Cys85–Cys92. N-linked (GlcNAc...) asparagine glycosylation occurs at Asn78. A glycan (N-linked (GlcNAc...) asparagine) is linked at Asn161.

The protein belongs to the peptidase C1 family. In terms of processing, glycosylated. As to expression, highly expressed in aorta, heart, placenta, kidney and a colorectal adenocarcinoma cell line. Moderately expressed in skeletal muscle, pancreas, lung, lymph nodes, adrenal gland, bone marrow and thyroid. Weakly expressed in colon, small intestine, ovary, spleen, testis and prostate. Predominantly found in vascular smooth muscle cells, but also in cardiac and skeletal muscle cells as well as kidney.

Its subcellular location is the secreted. Functionally, may be implicated in the adrenocortical zonation and in mechanisms for repressing the CYP11B1 gene expression in adrenocortical cells. This is a non catalytic peptidase C1 family protein. This Homo sapiens (Human) protein is Tubulointerstitial nephritis antigen-like (TINAGL1).